The primary structure comprises 264 residues: MSKITSSTLRTFKSEGKKFTALTAYDASFANAFDSEGVDVLLVGDSMGMVLQGHNDTLPVTVDDIAYHTRCVRRGVERALLIADMPFMSYATPEQTMTNATTLMQAGANMVKVEGGHWLLESVKMLTERGIPVCAHLGLTPQSVHVFGGFKIQGRDADNAQRILDEAKALEAAGAQLLVVECIPAPLAKAITEALTIPVIGIGAGADTDGQILVMHDVLGISSGYIPRFSKNYLKQTGEIRSAVRAYIDEVAQGVFPAEEHTFS.

The Mg(2+) site is built by Asp45 and Asp84. 3-methyl-2-oxobutanoate is bound by residues 45 to 46 (DS), Asp84, and Lys112. Glu114 lines the Mg(2+) pocket. Catalysis depends on Glu181, which acts as the Proton acceptor.

The protein belongs to the PanB family. In terms of assembly, homodecamer; pentamer of dimers. It depends on Mg(2+) as a cofactor.

It is found in the cytoplasm. The enzyme catalyses 3-methyl-2-oxobutanoate + (6R)-5,10-methylene-5,6,7,8-tetrahydrofolate + H2O = 2-dehydropantoate + (6S)-5,6,7,8-tetrahydrofolate. It functions in the pathway cofactor biosynthesis; (R)-pantothenate biosynthesis; (R)-pantoate from 3-methyl-2-oxobutanoate: step 1/2. Its function is as follows. Catalyzes the reversible reaction in which hydroxymethyl group from 5,10-methylenetetrahydrofolate is transferred onto alpha-ketoisovalerate to form ketopantoate. The sequence is that of 3-methyl-2-oxobutanoate hydroxymethyltransferase from Shewanella piezotolerans (strain WP3 / JCM 13877).